A 442-amino-acid polypeptide reads, in one-letter code: MENWSKDITHSYLEQETTGINKSTQPDEQLTMNSEKSMHRKSTELVNEITCENTEWPGQRSTNFQIISSYPDDESVYCTTEKYNVMEHRHNDMHYECMTPCQVTSDSDKEKTIAFLLKELDILRTSNKKLQQKLAKEDKEQRKLKFKLELQEKETEAKIAEKTAALVEEVYFAQKERDEAVMSRLQLAIEERDEAIARAKHMEMSLKVLENINPEENDMTLQELLNRINNADTGIAIQKNGAIIVDRIYKTKECKMRITAEEMSALIEERDAALSKCKRLEQELHHVKEQNQTSANNMRHLTAENNQERALKAKLLSMQQARETAVQQYKKLEEEIQTLRVYYSLHKSLSQEENLKDQFNYTLSTYEEALKNRENIVSITQQQNEELATQLQQALTERANMELQLQHAREASQVANEKVQKLERLVDVLRKKVGTGTMRTVI.

Positions 1-39 (MENWSKDITHSYLEQETTGINKSTQPDEQLTMNSEKSMH) are disordered. A compositionally biased stretch (polar residues) spans 12-35 (YLEQETTGINKSTQPDEQLTMNSE). Coiled-coil stretches lie at residues 107-212 (SDKE…LENI) and 253-435 (ECKM…KVGT).

Expressed very weakly in heart, liver, skeletal muscle, kidney, pancreas and fetal kidney. Not detected in brain, placenta and lung.

This chain is Mirror-image polydactyly gene 1 protein (MIPOL1), found in Homo sapiens (Human).